Consider the following 117-residue polypeptide: Aspartate 1-decarboxylase (117 aa).

Ser25 (schiff-base intermediate with substrate; via pyruvic acid) is an active-site residue. Pyruvic acid (Ser) is present on Ser25. Thr57 lines the substrate pocket. The active-site Proton donor is Tyr58. Position 73 to 75 (Gly73 to Ala75) interacts with substrate.

The protein belongs to the PanD family. Heterooctamer of four alpha and four beta subunits. Requires pyruvate as cofactor. Post-translationally, is synthesized initially as an inactive proenzyme, which is activated by self-cleavage at a specific serine bond to produce a beta-subunit with a hydroxyl group at its C-terminus and an alpha-subunit with a pyruvoyl group at its N-terminus.

It localises to the cytoplasm. The enzyme catalyses L-aspartate + H(+) = beta-alanine + CO2. The protein operates within cofactor biosynthesis; (R)-pantothenate biosynthesis; beta-alanine from L-aspartate: step 1/1. Functionally, catalyzes the pyruvoyl-dependent decarboxylation of aspartate to produce beta-alanine. In Bacteroides fragilis (strain ATCC 25285 / DSM 2151 / CCUG 4856 / JCM 11019 / LMG 10263 / NCTC 9343 / Onslow / VPI 2553 / EN-2), this protein is Aspartate 1-decarboxylase.